The primary structure comprises 507 residues: Blue light receptor lreB (507 aa).

The PAS domain occupies 170–234 (RVLNEMKDML…EEMNECITTT (65 aa)). Residues 463 to 488 (CTDCGTSDSPEWRKGPEGPKTLCNAC) form a GATA-type zinc finger.

Its function is as follows. Probable transcription factor involved in light regulation. Plays crucial roles in fungal growth and asexual development. Involved in conidiophore formation, sclerotium production, and conidial stress tolerance. Positively regulates the fungal pathogenicity towards maize and aflatoxin B1 production. The polypeptide is Blue light receptor lreB (Aspergillus flavus).